Here is a 251-residue protein sequence, read N- to C-terminus: uncharacterized protein (251 aa).

Belongs to the FAM243 family.

This is an uncharacterized protein from Bos taurus (Bovine).